Reading from the N-terminus, the 100-residue chain is Large ribosomal subunit protein uL23 (100 aa).

Belongs to the universal ribosomal protein uL23 family. As to quaternary structure, part of the 50S ribosomal subunit. Contacts protein L29, and trigger factor when it is bound to the ribosome.

Functionally, one of the early assembly proteins it binds 23S rRNA. One of the proteins that surrounds the polypeptide exit tunnel on the outside of the ribosome. Forms the main docking site for trigger factor binding to the ribosome. In Shewanella sp. (strain MR-4), this protein is Large ribosomal subunit protein uL23.